Consider the following 451-residue polypeptide: UPF0210 protein APL_1491 (451 aa).

Belongs to the UPF0210 family. As to quaternary structure, homodimer.

This is UPF0210 protein APL_1491 from Actinobacillus pleuropneumoniae serotype 5b (strain L20).